The following is a 409-amino-acid chain: L-cysteine:1D-myo-inositol 2-amino-2-deoxy-alpha-D-glucopyranoside ligase (409 aa).

Cys-43 contacts Zn(2+). L-cysteinyl-5'-AMP is bound by residues 43–46 (CGIT), Thr-58, and 81–83 (NVT). Positions 45-55 (ITPYDATHMGH) match the 'HIGH' region motif. Residues 183–188 (ERGGDP) carry the 'ERGGDP' region motif. Trp-224 serves as a coordination point for L-cysteinyl-5'-AMP. Position 228 (Cys-228) interacts with Zn(2+). Residue 246–248 (GSD) coordinates L-cysteinyl-5'-AMP. His-253 is a Zn(2+) binding site. Residue Val-280 participates in L-cysteinyl-5'-AMP binding. Positions 286-290 (KMSKS) match the 'KMSKS' region motif.

It belongs to the class-I aminoacyl-tRNA synthetase family. MshC subfamily. Monomer. Zn(2+) is required as a cofactor.

It carries out the reaction 1D-myo-inositol 2-amino-2-deoxy-alpha-D-glucopyranoside + L-cysteine + ATP = 1D-myo-inositol 2-(L-cysteinylamino)-2-deoxy-alpha-D-glucopyranoside + AMP + diphosphate + H(+). Functionally, catalyzes the ATP-dependent condensation of GlcN-Ins and L-cysteine to form L-Cys-GlcN-Ins. This Streptomyces scabiei (strain 87.22) protein is L-cysteine:1D-myo-inositol 2-amino-2-deoxy-alpha-D-glucopyranoside ligase.